The chain runs to 499 residues: Potassium voltage-gated channel subfamily A member 2 (499 aa).

The interval 1 to 26 is disordered; that stretch reads MTVATGDPADEAAALPGHPQDTYDPE. A tetramerization domain region spans residues 1-125; the sequence is MTVATGDPAD…YELGEEAMEM (125 aa). The Cytoplasmic portion of the chain corresponds to 1–160; sequence MTVATGDPAD…LLFEYPESSG (160 aa). The helical transmembrane segment at 161–182 threads the bilayer; the sequence is PARIIAIVSVMVILISIVSFCL. Residues 183–221 are Extracellular-facing; that stretch reads ETLPIFRDENEDMHGSGVTFHTYSNSTIGYQQSTSFTDP. N207 is a glycosylation site (N-linked (GlcNAc...) asparagine). The chain crosses the membrane as a helical span at residues 222–243; sequence FFIVETLCIIWFSFEFLVRFFA. C244 carries S-palmitoyl cysteine lipidation. Over 244–254 the chain is Cytoplasmic; it reads CPSKAGFFTNI. A helical transmembrane segment spans residues 255–275; that stretch reads MNIIDIVAIIPYFITLGTELA. Over 276-289 the chain is Extracellular; it reads EKPEDAQQGQQAMS. A helical; Voltage-sensor membrane pass occupies residues 290–310; that stretch reads LAILRVIRLVRVFRIFKLSRH. The Cytoplasmic segment spans residues 311–325; it reads SKGLQILGQTLKASM. An S4-S5 linker region spans residues 312 to 325; sequence KGLQILGQTLKASM. Residues 326–347 form a helical membrane-spanning segment; it reads RELGLLIFFLFIGVILFSSAVY. Topologically, residues 348–361 are extracellular; that stretch reads FAEADERESQFPSI. An intramembrane region (helical) is located at residues 362–373; the sequence is PDAFWWAVVSMT. Positions 374–379 match the Selectivity filter motif; the sequence is TVGYGD. The stretch at 374 to 381 is an intramembrane region; that stretch reads TVGYGDMV. Residues 382 to 388 lie on the Extracellular side of the membrane; sequence PTTIGGK. A helical membrane pass occupies residues 389–417; sequence IVGSLCAIAGVLTIALPVPVIVSNFNYFY. Over 418 to 499 the chain is Cytoplasmic; sequence HRETEGEEQA…VNITKMLTDV (82 aa). Phosphotyrosine is present on Y429. S434, S440, S441, and S449 each carry phosphoserine. Phosphotyrosine is present on Y458. S468 carries the post-translational modification Phosphoserine. A PDZ-binding motif is present at residues 497 to 499; it reads TDV.

Belongs to the potassium channel family. A (Shaker) (TC 1.A.1.2) subfamily. Kv1.2/KCNA2 sub-subfamily. Homotetramer and heterotetramer with other channel-forming alpha subunits, such as KCNA1, KCNA4, KCNA5, KCNA6 and KCNA7. Channel activity is regulated by interaction with the beta subunits, including KCNAB1 and KCNAB2. Identified in a complex with KCNA1 and KCNAB2. Identified in a complex with KCNA5 and KCNAB1. Identified in a complex with KCNA4 and FYN. Interacts with the beta subunit KCNAB1. Interacts with PTK2B. Interacts (via C-terminus) with CTTN. Interacts (via N-terminal cytoplasmic domain) with RHOA (GTP-bound form); this regulates channel activity by reducing location at the cell surface in response to CHRM1 activation. Interacts with DRD2. Interacts with SIGMAR1; cocaine consumption leads to increased interaction. Interacts with ADAM22. Interacts (via C-terminus) with the PDZ domains of DLG1, DLG2 and DLG4. Interacts with CNTNAP2. Interacts with ADAM11. Interacts with LYNX1. In terms of processing, phosphorylated on tyrosine residues; phosphorylation increases in response to ischemia. Phosphorylated on tyrosine residues by activated PTK2B/PYK2. Phosphorylation on tyrosine residues suppresses ion channel activity. Phosphorylated on tyrosine residues in response to CHRM1 activation; this abolishes interaction with CTTN. This is probably due to endocytosis of the phosphorylated channel subunits. Phosphorylated on serine residues in response to increased cAMP levels; phosphorylation is apparently not catalyzed by PKA. N-glycosylated, with complex, sialylated N-glycans. In terms of tissue distribution, detected in brain cortex. Detected in peroneal nerve in the juxtaparanodal regions of the node of Ranvier; expression is decreased in patients with diabetes mellitus that suffer from axonal neuropathy. Detected in paranodal and juxtanodal zones in myelinated spinal cord (at protein level).

The protein localises to the cell membrane. It localises to the membrane. The protein resides in the cell projection. It is found in the axon. Its subcellular location is the synapse. The protein localises to the endoplasmic reticulum membrane. It localises to the lamellipodium membrane. The protein resides in the synaptosome. It is found in the presynaptic cell membrane. Its subcellular location is the dendrite. The protein localises to the cell junction. It localises to the paranodal septate junction. The catalysed reaction is K(+)(in) = K(+)(out). Its activity is regulated as follows. Inhibited by 4-aminopyridine (4-AP) and charybdotoxin (CTX), but not by tetraethylammonium (TEA). Inhibited by dendrotoxin (DTX). Inhibited by tityustoxin-K alpha (TsTX-Kalpha), a toxin that is highly specific for KCNA2. Inhibited by maurotoxin. Inhibited by kappaM conotoxins kappaM-RIIIJ and kappaM-RIIIK; kappaM-RIIIJ has much higher affinity for channels containing KCNA2 than kappaM-RIIIK, with the exception of heterodimers formed by KCNA2 and KCNA7 where the opposite is true. In terms of biological role, voltage-gated potassium channel that mediates transmembrane potassium transport in excitable membranes, primarily in the brain and the central nervous system, but also in the cardiovascular system. Prevents aberrant action potential firing and regulates neuronal output. Forms tetrameric potassium-selective channels through which potassium ions pass in accordance with their electrochemical gradient. The channel alternates between opened and closed conformations in response to the voltage difference across the membrane. Can form functional homotetrameric channels and heterotetrameric channels that contain variable proportions of KCNA1, KCNA2, KCNA4, KCNA5, KCNA6, KCNA7, and possibly other family members as well; channel properties depend on the type of alpha subunits that are part of the channel. Channel properties are modulated by cytoplasmic beta subunits that regulate the subcellular location of the alpha subunits and promote rapid inactivation of delayed rectifier potassium channels. In vivo, membranes probably contain a mixture of heteromeric potassium channel complexes, making it difficult to assign currents observed in intact tissues to any particular potassium channel family member. Homotetrameric KCNA2 forms a delayed-rectifier potassium channel that opens in response to membrane depolarization, followed by slow spontaneous channel closure. In contrast, a heteromultimer formed by KCNA2 and KCNA4 shows rapid inactivation. Regulates neuronal excitability and plays a role as pacemaker in the regulation of neuronal action potentials. KCNA2-containing channels play a presynaptic role and prevent hyperexcitability and aberrant action potential firing. Response to toxins that are selective for KCNA2-containing potassium channels suggests that in Purkinje cells, dendritic subthreshold KCNA2-containing potassium channels prevent random spontaneous calcium spikes, suppressing dendritic hyperexcitability without hindering the generation of somatic action potentials, and thereby play an important role in motor coordination. Plays a role in the induction of long-term potentiation of neuron excitability in the CA3 layer of the hippocampus. May function as down-stream effector for G protein-coupled receptors and inhibit GABAergic inputs to basolateral amygdala neurons. May contribute to the regulation of neurotransmitter release, such as gamma-aminobutyric acid (GABA). Contributes to the regulation of the axonal release of the neurotransmitter dopamine. Reduced KCNA2 expression plays a role in the perception of neuropathic pain after peripheral nerve injury, but not acute pain. Plays a role in the regulation of the time spent in non-rapid eye movement (NREM) sleep. This chain is Potassium voltage-gated channel subfamily A member 2 (KCNA2), found in Homo sapiens (Human).